A 422-amino-acid chain; its full sequence is 5'-deoxyadenosine deaminase (422 aa).

Zn(2+)-binding residues include His-57 and His-59. Positions 86 and 178 each coordinate substrate. His-205 provides a ligand contact to Zn(2+). Residues Glu-208 and Asp-294 each contribute to the substrate site. Position 294 (Asp-294) interacts with Zn(2+).

It belongs to the metallo-dependent hydrolases superfamily. MTA/SAH deaminase family. In terms of assembly, homotetramer. The cofactor is Zn(2+).

The catalysed reaction is 5'-deoxyadenosine + H2O + H(+) = 5'-deoxyinosine + NH4(+). The enzyme catalyses S-adenosyl-L-homocysteine + H2O + H(+) = S-inosyl-L-homocysteine + NH4(+). It catalyses the reaction S-methyl-5'-thioadenosine + H2O + H(+) = S-methyl-5'-thioinosine + NH4(+). It carries out the reaction adenosine + H2O + H(+) = inosine + NH4(+). The protein operates within amino-acid biosynthesis; S-adenosyl-L-methionine biosynthesis. In terms of biological role, catalyzes the deamination of three SAM-derived enzymatic products, namely 5'-deoxyadenosine, S-adenosyl-L-homocysteine, and 5'-methylthioadenosine, to produce the inosine analogs. Can also deaminate adenosine. The preferred substrate for this enzyme is 5'-deoxyadenosine, but all these substrates are efficiently deaminated. Likely functions in a S-adenosyl-L-methionine (SAM) recycling pathway from S-adenosyl-L-homocysteine (SAH) produced from SAM-dependent methylation reactions. May also be involved in the recycling of 5'-deoxyadenosine, whereupon the 5'-deoxyribose moiety of 5'-deoxyinosine is further metabolized to deoxyhexoses used for the biosynthesis of aromatic amino acids in methanogens. This chain is 5'-deoxyadenosine deaminase, found in Methanococcus maripaludis (strain C7 / ATCC BAA-1331).